The primary structure comprises 137 residues: Large ribosomal subunit protein uL16 (137 aa).

It belongs to the universal ribosomal protein uL16 family. Part of the 50S ribosomal subunit.

Functionally, binds 23S rRNA and is also seen to make contacts with the A and possibly P site tRNAs. This chain is Large ribosomal subunit protein uL16, found in Lactococcus lactis subsp. lactis (strain IL1403) (Streptococcus lactis).